The primary structure comprises 469 residues: Glutamate--tRNA ligase (469 aa).

The short motif at 9–19 (PSPTGYLHVGG) is the 'HIGH' region element. Residues C98, C100, C125, and D127 each coordinate Zn(2+). Positions 237 to 241 (KLSKR) match the 'KMSKS' region motif. Residue K240 coordinates ATP.

Belongs to the class-I aminoacyl-tRNA synthetase family. Glutamate--tRNA ligase type 1 subfamily. Monomer. The cofactor is Zn(2+).

It is found in the cytoplasm. The enzyme catalyses tRNA(Glu) + L-glutamate + ATP = L-glutamyl-tRNA(Glu) + AMP + diphosphate. Catalyzes the attachment of glutamate to tRNA(Glu) in a two-step reaction: glutamate is first activated by ATP to form Glu-AMP and then transferred to the acceptor end of tRNA(Glu). The polypeptide is Glutamate--tRNA ligase (Erwinia tasmaniensis (strain DSM 17950 / CFBP 7177 / CIP 109463 / NCPPB 4357 / Et1/99)).